The following is a 341-amino-acid chain: Uroporphyrinogen decarboxylase (341 aa).

Substrate is bound by residues 23–27 (RQAGR), Phe-42, Asp-73, Tyr-148, Ser-203, and His-318.

Belongs to the uroporphyrinogen decarboxylase family. As to quaternary structure, homodimer.

It localises to the cytoplasm. The enzyme catalyses uroporphyrinogen III + 4 H(+) = coproporphyrinogen III + 4 CO2. Its pathway is porphyrin-containing compound metabolism; protoporphyrin-IX biosynthesis; coproporphyrinogen-III from 5-aminolevulinate: step 4/4. Functionally, catalyzes the decarboxylation of four acetate groups of uroporphyrinogen-III to yield coproporphyrinogen-III. The polypeptide is Uroporphyrinogen decarboxylase (Brucella melitensis biotype 1 (strain ATCC 23456 / CCUG 17765 / NCTC 10094 / 16M)).